The primary structure comprises 276 residues: Diaminopimelate epimerase (276 aa).

3 residues coordinate substrate: N13, Q46, and N66. Residue C75 is the Proton donor of the active site. Substrate is bound by residues 76 to 77 (GN), N159, N192, and 210 to 211 (ER). Catalysis depends on C219, which acts as the Proton acceptor. 220-221 (GS) serves as a coordination point for substrate.

Belongs to the diaminopimelate epimerase family. As to quaternary structure, homodimer.

The protein resides in the cytoplasm. The enzyme catalyses (2S,6S)-2,6-diaminopimelate = meso-2,6-diaminopimelate. It participates in amino-acid biosynthesis; L-lysine biosynthesis via DAP pathway; DL-2,6-diaminopimelate from LL-2,6-diaminopimelate: step 1/1. In terms of biological role, catalyzes the stereoinversion of LL-2,6-diaminopimelate (L,L-DAP) to meso-diaminopimelate (meso-DAP), a precursor of L-lysine and an essential component of the bacterial peptidoglycan. The sequence is that of Diaminopimelate epimerase from Coxiella burnetii (strain CbuK_Q154) (Coxiella burnetii (strain Q154)).